We begin with the raw amino-acid sequence, 165 residues long: Nucleotide-binding protein MXAN_1478 (165 aa).

The protein belongs to the YajQ family.

In terms of biological role, nucleotide-binding protein. The chain is Nucleotide-binding protein MXAN_1478 from Myxococcus xanthus (strain DK1622).